A 257-amino-acid polypeptide reads, in one-letter code: 5'-nucleotidase SurE (257 aa).

A divalent metal cation contacts are provided by Asp-8, Asp-9, Ser-40, and Asn-92.

The protein belongs to the SurE nucleotidase family. A divalent metal cation is required as a cofactor.

It localises to the cytoplasm. The catalysed reaction is a ribonucleoside 5'-phosphate + H2O = a ribonucleoside + phosphate. In terms of biological role, nucleotidase that shows phosphatase activity on nucleoside 5'-monophosphates. In Rhizobium etli (strain ATCC 51251 / DSM 11541 / JCM 21823 / NBRC 15573 / CFN 42), this protein is 5'-nucleotidase SurE.